Consider the following 266-residue polypeptide: Dihydropteroate synthase (266 aa).

In terms of domain architecture, Pterin-binding spans 12-260 (AAIMGILNVT…DVKANQDIVA (249 aa)). Residue N19 participates in Mg(2+) binding. (7,8-dihydropterin-6-yl)methyl diphosphate-binding positions include T59, D93, N112, D176, K212, and 248 to 250 (RVH).

This sequence belongs to the DHPS family. As to quaternary structure, homodimer or homotrimer. Requires Mg(2+) as cofactor.

The enzyme catalyses (7,8-dihydropterin-6-yl)methyl diphosphate + 4-aminobenzoate = 7,8-dihydropteroate + diphosphate. Its pathway is cofactor biosynthesis; tetrahydrofolate biosynthesis; 7,8-dihydrofolate from 2-amino-4-hydroxy-6-hydroxymethyl-7,8-dihydropteridine diphosphate and 4-aminobenzoate: step 1/2. In terms of biological role, catalyzes the condensation of para-aminobenzoate (pABA) with 6-hydroxymethyl-7,8-dihydropterin diphosphate (DHPt-PP) to form 7,8-dihydropteroate (H2Pte), the immediate precursor of folate derivatives. This Streptococcus pyogenes serotype M1 protein is Dihydropteroate synthase (folP).